Reading from the N-terminus, the 670-residue chain is tRNA 5-methylaminomethyl-2-thiouridine biosynthesis bifunctional protein MnmC (670 aa).

Positions 1–242 are tRNA (mnm(5)s(2)U34)-methyltransferase; the sequence is MTFSVQHAEI…KRECLSGLKI (242 aa). The segment at 269 to 670 is FAD-dependent cmnm(5)s(2)U34 oxidoreductase; the sequence is IGGGIASLCA…KKWLKGSKVE (402 aa).

In the N-terminal section; belongs to the methyltransferase superfamily. tRNA (mnm(5)s(2)U34)-methyltransferase family. This sequence in the C-terminal section; belongs to the DAO family. FAD serves as cofactor.

It is found in the cytoplasm. It catalyses the reaction 5-aminomethyl-2-thiouridine(34) in tRNA + S-adenosyl-L-methionine = 5-methylaminomethyl-2-thiouridine(34) in tRNA + S-adenosyl-L-homocysteine + H(+). Catalyzes the last two steps in the biosynthesis of 5-methylaminomethyl-2-thiouridine (mnm(5)s(2)U) at the wobble position (U34) in tRNA. Catalyzes the FAD-dependent demodification of cmnm(5)s(2)U34 to nm(5)s(2)U34, followed by the transfer of a methyl group from S-adenosyl-L-methionine to nm(5)s(2)U34, to form mnm(5)s(2)U34. The polypeptide is tRNA 5-methylaminomethyl-2-thiouridine biosynthesis bifunctional protein MnmC (Haemophilus influenzae (strain PittGG)).